Here is a 136-residue protein sequence, read N- to C-terminus: Psoriasis susceptibility 1 candidate gene 2 protein homolog (136 aa).

A signal peptide spans 1 to 22 (MILNWKLLGILVLCLHTRGISG). The interval 20–136 (ISGSEDHPSH…DLDPPREEYR (117 aa)) is disordered. The span at 23–33 (SEDHPSHPPAE) shows a compositional bias: basic and acidic residues. Pro residues-rich tracts occupy residues 44–74 (PQGP…PPWR) and 83–116 (PPEP…PPAP). A compositionally biased stretch (basic and acidic residues) spans 117–136 (EVDHRPQEEPDLDPPREEYR).

The protein resides in the secreted. In Pan troglodytes (Chimpanzee), this protein is Psoriasis susceptibility 1 candidate gene 2 protein homolog (PSORS1C2).